The sequence spans 410 residues: Arginine deiminase (410 aa).

C400 serves as the catalytic Amidino-cysteine intermediate.

The protein belongs to the arginine deiminase family.

It localises to the cytoplasm. It catalyses the reaction L-arginine + H2O = L-citrulline + NH4(+). It functions in the pathway amino-acid degradation; L-arginine degradation via ADI pathway; carbamoyl phosphate from L-arginine: step 1/2. The chain is Arginine deiminase from Streptococcus agalactiae serotype III (strain NEM316).